The primary structure comprises 534 residues: Cytochrome c oxidase subunit 1 (534 aa).

A helical transmembrane segment spans residues 16–36 (VLYFIFAIFCGMAGTAMSLII). Glutamate 39, alanine 42, and glycine 44 together coordinate Ca(2+). Helical transmembrane passes span 57-77 (VLVV…ALIG), 101-121 (ISFW…LVES), 147-167 (AIFA…NFIV), 182-202 (LPLF…SLPV), 235-255 (LFWF…FGII), and 267-287 (VFGE…GFLV). Fe(II)-heme a is bound at residue histidine 62. Histidine 241 provides a ligand contact to Cu cation. Positions 241–245 (HPEVY) form a cross-link, 1'-histidyl-3'-tyrosine (His-Tyr). Tyrosine 245 provides a ligand contact to O2. Cu cation-binding residues include histidine 290 and histidine 291. 2 consecutive transmembrane segments (helical) span residues 310–330 (MIIA…IYGG) and 338–358 (MLYA…GVAL). Residues histidine 368 and aspartate 369 each contribute to the Mg(2+) site. 2 helical membrane passes run 372 to 392 (YVVG…LFAG) and 412 to 432 (IQFW…HFLG). Residue histidine 376 coordinates heme a3. A Fe(II)-heme a-binding site is contributed by histidine 378. Residue proline 441 coordinates Ca(2+). Residues 452–472 (YVASIGSIIAVFSLFLFIYIL) form a helical membrane-spanning segment.

This sequence belongs to the heme-copper respiratory oxidase family. As to quaternary structure, component of the cytochrome c oxidase (complex IV, CIV), a multisubunit enzyme composed of a catalytic core of 3 subunits and several supernumerary subunits. The complex exists as a monomer or a dimer and forms supercomplexes (SCs) in the inner mitochondrial membrane with ubiquinol-cytochrome c oxidoreductase (cytochrome b-c1 complex, complex III, CIII). Requires heme as cofactor. It depends on Cu cation as a cofactor.

It is found in the mitochondrion inner membrane. It catalyses the reaction 4 Fe(II)-[cytochrome c] + O2 + 8 H(+)(in) = 4 Fe(III)-[cytochrome c] + 2 H2O + 4 H(+)(out). The protein operates within energy metabolism; oxidative phosphorylation. In terms of biological role, component of the cytochrome c oxidase, the last enzyme in the mitochondrial electron transport chain which drives oxidative phosphorylation. The respiratory chain contains 3 multisubunit complexes succinate dehydrogenase (complex II, CII), ubiquinol-cytochrome c oxidoreductase (cytochrome b-c1 complex, complex III, CIII) and cytochrome c oxidase (complex IV, CIV), that cooperate to transfer electrons derived from NADH and succinate to molecular oxygen, creating an electrochemical gradient over the inner membrane that drives transmembrane transport and the ATP synthase. Cytochrome c oxidase is the component of the respiratory chain that catalyzes the reduction of oxygen to water. Electrons originating from reduced cytochrome c in the intermembrane space (IMS) are transferred via the dinuclear copper A center (CU(A)) of subunit 2 and heme A of subunit 1 to the active site in subunit 1, a binuclear center (BNC) formed by heme A3 and copper B (CU(B)). The BNC reduces molecular oxygen to 2 water molecules using 4 electrons from cytochrome c in the IMS and 4 protons from the mitochondrial matrix. The chain is Cytochrome c oxidase subunit 1 (COX1) from Kluyveromyces lactis (strain ATCC 8585 / CBS 2359 / DSM 70799 / NBRC 1267 / NRRL Y-1140 / WM37) (Yeast).